A 241-amino-acid polypeptide reads, in one-letter code: Chlorophyll a-b binding protein 6, chloroplastic (241 aa).

Residues 1–35 (MASNSLMSCGIAAVYPSLLSSSKSKFVSAGVPLPN) constitute a chloroplast transit peptide. Residue tryptophan 48 participates in chlorophyll b binding. Residues phenylalanine 68, glutamate 87, and histidine 90 each contribute to the chlorophyll a site. Arginine 92 is a binding site for chlorophyll b. The helical transmembrane segment at 93–113 (WAMLAVPGILVPEALGYGNWV) threads the bilayer. Leucine 129 provides a ligand contact to chlorophyll a. The chain crosses the membrane as a helical span at residues 132–152 (PVPWGTLPTILAIEFLAIAFV). 3 residues coordinate chlorophyll b: valine 133, glutamate 153, and arginine 156. Residues lysine 190, glutamate 191, asparagine 194, arginine 196, glutamine 208, and histidine 224 each coordinate chlorophyll a. A helical transmembrane segment spans residues 197-217 (LALLAFVGFCVQQSAYPGTGP).

The protein belongs to the light-harvesting chlorophyll a/b-binding (LHC) protein family. In terms of assembly, the LHC complex consists of chlorophyll a-b binding proteins. Red-emitting heterodimer with LHCA4. Interacts with LHCA5. The cofactor is Binds at least 14 chlorophylls (8 Chl-a and 6 Chl-b) and carotenoids such as lutein and neoxanthin.. Post-translationally, photoregulated by reversible phosphorylation of its threonine residues.

The protein resides in the plastid. It localises to the chloroplast thylakoid membrane. Its function is as follows. The light-harvesting complex (LHC) functions as a light receptor, it captures and delivers excitation energy to photosystems with which it is closely associated. The sequence is that of Chlorophyll a-b binding protein 6, chloroplastic from Arabidopsis thaliana (Mouse-ear cress).